The primary structure comprises 177 residues: Peptide methionine sulfoxide reductase MsrA (177 aa).

C15 is a catalytic residue.

The protein belongs to the MsrA Met sulfoxide reductase family.

It carries out the reaction L-methionyl-[protein] + [thioredoxin]-disulfide + H2O = L-methionyl-(S)-S-oxide-[protein] + [thioredoxin]-dithiol. It catalyses the reaction [thioredoxin]-disulfide + L-methionine + H2O = L-methionine (S)-S-oxide + [thioredoxin]-dithiol. In terms of biological role, has an important function as a repair enzyme for proteins that have been inactivated by oxidation. Catalyzes the reversible oxidation-reduction of methionine sulfoxide in proteins to methionine. This chain is Peptide methionine sulfoxide reductase MsrA, found in Mycobacterium leprae (strain Br4923).